The chain runs to 218 residues: uncharacterized protein (218 aa).

5 helical membrane-spanning segments follow: residues 28–48, 66–86, 92–112, 122–142, and 173–193; these read ILLF…LSGL, FDIG…WKPL, LGTL…TKIL, MIFC…YLTC, and ISVC…TVLF.

It is found in the cell membrane. This is an uncharacterized protein from Haemophilus influenzae (strain ATCC 51907 / DSM 11121 / KW20 / Rd).